We begin with the raw amino-acid sequence, 493 residues long: Ketol-acid reductoisomerase (NADP(+)) (493 aa).

Residues 14-208 form the KARI N-terminal Rossmann domain; sequence LDQLGRCRFM…GGHRAGVLES (195 aa). NADP(+) is bound by residues 45–48, arginine 68, arginine 76, serine 78, and 108–110; these read CGAQ and DKQ. Histidine 132 is a catalytic residue. NADP(+) is bound at residue glycine 158. KARI C-terminal knotted domains lie at 209–345 and 346–486; these read SFVA…APKG and ENIK…MTDM. Mg(2+) is bound by residues aspartate 217, glutamate 221, glutamate 390, and glutamate 394. Serine 415 lines the substrate pocket.

Belongs to the ketol-acid reductoisomerase family. Requires Mg(2+) as cofactor.

The enzyme catalyses (2R)-2,3-dihydroxy-3-methylbutanoate + NADP(+) = (2S)-2-acetolactate + NADPH + H(+). It carries out the reaction (2R,3R)-2,3-dihydroxy-3-methylpentanoate + NADP(+) = (S)-2-ethyl-2-hydroxy-3-oxobutanoate + NADPH + H(+). The protein operates within amino-acid biosynthesis; L-isoleucine biosynthesis; L-isoleucine from 2-oxobutanoate: step 2/4. It participates in amino-acid biosynthesis; L-valine biosynthesis; L-valine from pyruvate: step 2/4. Involved in the biosynthesis of branched-chain amino acids (BCAA). Catalyzes an alkyl-migration followed by a ketol-acid reduction of (S)-2-acetolactate (S2AL) to yield (R)-2,3-dihydroxy-isovalerate. In the isomerase reaction, S2AL is rearranged via a Mg-dependent methyl migration to produce 3-hydroxy-3-methyl-2-ketobutyrate (HMKB). In the reductase reaction, this 2-ketoacid undergoes a metal-dependent reduction by NADPH to yield (R)-2,3-dihydroxy-isovalerate. The chain is Ketol-acid reductoisomerase (NADP(+)) from Histophilus somni (strain 129Pt) (Haemophilus somnus).